Consider the following 87-residue polypeptide: Small ribosomal subunit protein uS15 (87 aa).

The interval 1–22 (MSEINKAEIVASNARAPSDTGS) is disordered.

Belongs to the universal ribosomal protein uS15 family. As to quaternary structure, part of the 30S ribosomal subunit. Forms a bridge to the 50S subunit in the 70S ribosome, contacting the 23S rRNA.

One of the primary rRNA binding proteins, it binds directly to 16S rRNA where it helps nucleate assembly of the platform of the 30S subunit by binding and bridging several RNA helices of the 16S rRNA. In terms of biological role, forms an intersubunit bridge (bridge B4) with the 23S rRNA of the 50S subunit in the ribosome. The chain is Small ribosomal subunit protein uS15 from Leptothrix cholodnii (strain ATCC 51168 / LMG 8142 / SP-6) (Leptothrix discophora (strain SP-6)).